Here is a 199-residue protein sequence, read N- to C-terminus: Ras-related protein Rab-7b (199 aa).

Residues 15–22 (GALGVGKT), 34–40 (FEEYQTT), 63–67 (DTGGQ), 124–127 (NKID), and 154–155 (AK) contribute to the GTP site. 2 short sequence motifs (switch) span residues 28 to 41 (YVHK…QTTL) and 67 to 82 (QERF…KGSD). Phosphoserine is present on S186. 2 S-geranylgeranyl cysteine lipidation sites follow: C198 and C199.

Belongs to the small GTPase superfamily. Rab family.

It is found in the late endosome. The protein resides in the lysosome. The protein localises to the golgi apparatus. It localises to the trans-Golgi network. Its subcellular location is the cytoplasmic vesicle. It is found in the phagosome. The protein resides in the phagosome membrane. Functionally, controls vesicular trafficking from endosomes to the trans-Golgi network (TGN). Acts as a negative regulator of TLR9 signaling and can suppress TLR9-triggered TNFA, IL6, and IFNB production in macrophages by promoting TLR9 lysosomal degradation. Also negatively regulates TLR4 signaling in macrophages by promoting lysosomal degradation of TLR4. Promotes megakaryocytic differentiation by increasing NF-kappa-B-dependent IL6 production and subsequently enhancing the association of STAT3 with GATA1. Not involved in the regulation of the EGF- and EGFR degradation pathway. This chain is Ras-related protein Rab-7b (Rab7b), found in Mus musculus (Mouse).